A 106-amino-acid chain; its full sequence is Cell division topological specificity factor (106 aa).

Belongs to the MinE family.

Prevents the cell division inhibition by proteins MinC and MinD at internal division sites while permitting inhibition at polar sites. This ensures cell division at the proper site by restricting the formation of a division septum at the midpoint of the long axis of the cell. The protein is Cell division topological specificity factor of Prochlorococcus marinus subsp. pastoris (strain CCMP1986 / NIES-2087 / MED4).